We begin with the raw amino-acid sequence, 91 residues long: Small ribosomal subunit protein uS19 (91 aa).

The protein belongs to the universal ribosomal protein uS19 family.

Functionally, protein S19 forms a complex with S13 that binds strongly to the 16S ribosomal RNA. The polypeptide is Small ribosomal subunit protein uS19 (Sulfurimonas denitrificans (strain ATCC 33889 / DSM 1251) (Thiomicrospira denitrificans (strain ATCC 33889 / DSM 1251))).